The sequence spans 240 residues: MAKKPGSQNTSGRGQRDLKVKVKTARGRKLSSTRWLQRQLNDPYVKRARSEGYRGRAAYKILELDDRFRFLVPGARVVDLGCAPGGWCQVAVKRVNALGERTSKAQGSVLGVDLQEMEPIAGATLYQLDFMADDADEQVRVWLGGKADVVMSDMAASSSGHKQTDHLRIIALCEAAAYFAFDVLEEGGTFVAKVLAGGAEGELQKLLKQRFAKVANIKPPASRQDSSEKFVVATGFRAKA.

Over residues 1–13 (MAKKPGSQNTSGR) the composition is skewed to polar residues. A disordered region spans residues 1–20 (MAKKPGSQNTSGRGQRDLKV). S-adenosyl-L-methionine is bound by residues glycine 85, tryptophan 87, aspartate 113, aspartate 129, and aspartate 153. Lysine 193 functions as the Proton acceptor in the catalytic mechanism.

It belongs to the class I-like SAM-binding methyltransferase superfamily. RNA methyltransferase RlmE family.

The protein localises to the cytoplasm. It catalyses the reaction uridine(2552) in 23S rRNA + S-adenosyl-L-methionine = 2'-O-methyluridine(2552) in 23S rRNA + S-adenosyl-L-homocysteine + H(+). In terms of biological role, specifically methylates the uridine in position 2552 of 23S rRNA at the 2'-O position of the ribose in the fully assembled 50S ribosomal subunit. In Roseobacter denitrificans (strain ATCC 33942 / OCh 114) (Erythrobacter sp. (strain OCh 114)), this protein is Ribosomal RNA large subunit methyltransferase E.